The following is a 594-amino-acid chain: NADH-quinone oxidoreductase subunit C/D (594 aa).

The segment at 1 to 185 is NADH dehydrogenase I subunit C; it reads MTTGSALYIP…DPFSLNLAKQ (185 aa). The interval 209 to 594 is NADH dehydrogenase I subunit D; the sequence is DYMFLNLGPN…IDFVMADVDR (386 aa).

It in the N-terminal section; belongs to the complex I 30 kDa subunit family. The protein in the C-terminal section; belongs to the complex I 49 kDa subunit family. NDH-1 is composed of 13 different subunits. Subunits NuoB, CD, E, F, and G constitute the peripheral sector of the complex.

It localises to the cell inner membrane. It catalyses the reaction a quinone + NADH + 5 H(+)(in) = a quinol + NAD(+) + 4 H(+)(out). In terms of biological role, NDH-1 shuttles electrons from NADH, via FMN and iron-sulfur (Fe-S) centers, to quinones in the respiratory chain. The immediate electron acceptor for the enzyme in this species is believed to be ubiquinone. Couples the redox reaction to proton translocation (for every two electrons transferred, four hydrogen ions are translocated across the cytoplasmic membrane), and thus conserves the redox energy in a proton gradient. This chain is NADH-quinone oxidoreductase subunit C/D, found in Pseudomonas fluorescens (strain SBW25).